The primary structure comprises 27 residues: uncharacterized protein (27 aa).

This is an uncharacterized protein from Saccharomyces cerevisiae (strain ATCC 204508 / S288c) (Baker's yeast).